A 559-amino-acid polypeptide reads, in one-letter code: Glucosylglycerate phosphorylase (559 aa).

D229 functions as the Nucleophile in the catalytic mechanism.

This sequence belongs to the glycosyl hydrolase 13 family. Glucosylglycerate phosphorylase subfamily.

It catalyses the reaction (2R)-2-O-(alpha-D-glucopyranosyl)-glycerate + phosphate = (R)-glycerate + alpha-D-glucose 1-phosphate. Functionally, catalyzes the reversible phosphorolysis of glucosylglycerate into alpha-D-glucose 1-phosphate (Glc1P) and D-glycerate (also called (R)-glycerate). May be a regulator of intracellular levels of glucosylglycerate, a compatible solute that primarily protects organisms facing salt stress and very specific nutritional constraints. Cannot catalyze the phosphorolysis of sucrose. Does not act on other sugars such as alpha-D-galactose 1-phosphate, alpha-D-mannose 1-phosphate or beta-D-glucose 1-phosphate; in vitro D-erythronate can substitute for D-glycerate with a much lower efficiency. In Escherichia coli (strain K12), this protein is Glucosylglycerate phosphorylase (ycjM).